Here is a 148-residue protein sequence, read N- to C-terminus: Putative transmembrane protein ORF23 (148 aa).

The first 18 residues, 1 to 18 (MVIILLGVSIVVPGLFLA), serve as a signal peptide directing secretion. The Extracellular portion of the chain corresponds to 19-118 (TETPQTNTFE…YVGWPSGAET (100 aa)). Residues 119-139 (IITNIADIIIMATAVMIIGAI) traverse the membrane as a helical segment. Residues 140–148 (YTGYKVSIK) are Cytoplasmic-facing.

The protein resides in the host membrane. The protein is Putative transmembrane protein ORF23 of His1 virus (isolate Australia/Victoria) (His1V).